Reading from the N-terminus, the 206-residue chain is Probable GTP-binding protein EngB (206 aa).

An EngB-type G domain is found at isoleucine 29–aspartate 201. GTP is bound by residues glycine 37–serine 44, glycine 64–alanine 68, aspartate 82–glycine 85, threonine 149–aspartate 152, and tyrosine 180–valine 182. Positions 44 and 66 each coordinate Mg(2+).

This sequence belongs to the TRAFAC class TrmE-Era-EngA-EngB-Septin-like GTPase superfamily. EngB GTPase family. Requires Mg(2+) as cofactor.

In terms of biological role, necessary for normal cell division and for the maintenance of normal septation. The polypeptide is Probable GTP-binding protein EngB (Protochlamydia amoebophila (strain UWE25)).